We begin with the raw amino-acid sequence, 145 residues long: D-aminoacyl-tRNA deacylase (145 aa).

Residues 137 to 138 (GP) carry the Gly-cisPro motif, important for rejection of L-amino acids motif.

This sequence belongs to the DTD family. As to quaternary structure, homodimer.

It is found in the cytoplasm. It carries out the reaction glycyl-tRNA(Ala) + H2O = tRNA(Ala) + glycine + H(+). The catalysed reaction is a D-aminoacyl-tRNA + H2O = a tRNA + a D-alpha-amino acid + H(+). An aminoacyl-tRNA editing enzyme that deacylates mischarged D-aminoacyl-tRNAs. Also deacylates mischarged glycyl-tRNA(Ala), protecting cells against glycine mischarging by AlaRS. Acts via tRNA-based rather than protein-based catalysis; rejects L-amino acids rather than detecting D-amino acids in the active site. By recycling D-aminoacyl-tRNA to D-amino acids and free tRNA molecules, this enzyme counteracts the toxicity associated with the formation of D-aminoacyl-tRNA entities in vivo and helps enforce protein L-homochirality. In Shewanella frigidimarina (strain NCIMB 400), this protein is D-aminoacyl-tRNA deacylase.